A 61-amino-acid polypeptide reads, in one-letter code: Neurotoxin-like protein 1 (61 aa).

4 cysteine pairs are disulfide-bonded: cysteine 3–cysteine 24, cysteine 17–cysteine 38, cysteine 42–cysteine 53, and cysteine 54–cysteine 59.

Expressed by the venom gland.

Its subcellular location is the secreted. The polypeptide is Neurotoxin-like protein 1 (Causus rhombeatus (Rhombic night adder)).